The sequence spans 293 residues: 4-hydroxy-tetrahydrodipicolinate synthase (293 aa).

Residue threonine 45 participates in pyruvate binding. Catalysis depends on tyrosine 133, which acts as the Proton donor/acceptor. The active-site Schiff-base intermediate with substrate is the lysine 161. Residue isoleucine 203 coordinates pyruvate.

It belongs to the DapA family. As to quaternary structure, homotetramer; dimer of dimers.

It is found in the cytoplasm. The enzyme catalyses L-aspartate 4-semialdehyde + pyruvate = (2S,4S)-4-hydroxy-2,3,4,5-tetrahydrodipicolinate + H2O + H(+). It participates in amino-acid biosynthesis; L-lysine biosynthesis via DAP pathway; (S)-tetrahydrodipicolinate from L-aspartate: step 3/4. Catalyzes the condensation of (S)-aspartate-beta-semialdehyde [(S)-ASA] and pyruvate to 4-hydroxy-tetrahydrodipicolinate (HTPA). The sequence is that of 4-hydroxy-tetrahydrodipicolinate synthase from Shewanella piezotolerans (strain WP3 / JCM 13877).